The primary structure comprises 447 residues: Putative branched-chain amino acid carrier protein SH1502 (447 aa).

13 consecutive transmembrane segments (helical) span residues Trp-6–Pro-26, Val-40–Leu-60, Pro-74–Ile-94, Leu-116–Pro-136, Ile-143–Phe-163, Gly-193–Ile-213, Val-229–Ile-249, Val-270–Gly-287, Leu-290–Val-310, Ile-328–Met-348, Val-350–Ala-370, Ile-382–Val-402, and Leu-417–Val-437.

This sequence belongs to the branched chain amino acid transporter family.

It localises to the cell membrane. Functionally, component of the transport system for branched-chain amino acids (leucine, isoleucine and valine), which is coupled to a proton motive force. This is Putative branched-chain amino acid carrier protein SH1502 from Staphylococcus haemolyticus (strain JCSC1435).